An 838-amino-acid polypeptide reads, in one-letter code: Protein P (838 aa).

A terminal protein domain (TP) region spans residues 1–179 (MPLSYQHFRK…FCGSPYSWEQ (179 aa)). The interval 180–341 (ELQHSQRHGD…YCLSHLVNLR (162 aa)) is spacer. The tract at residues 219–245 (GLQPHQGPLASSQPGRSGSIRARAHPS) is disordered. Residues 342–685 (EDWGPCDDHG…YMNLYPVARQ (344 aa)) form a polymerase/reverse transcriptase domain (RT) region. The Reverse transcriptase domain occupies 352-595 (EHHIRIPRTP…YSLNFMGYII (244 aa)). Mg(2+)-binding residues include D424, D546, and D547.

The protein belongs to the hepadnaviridae P protein family.

The enzyme catalyses DNA(n) + a 2'-deoxyribonucleoside 5'-triphosphate = DNA(n+1) + diphosphate. The catalysed reaction is Endonucleolytic cleavage to 5'-phosphomonoester.. Activated by host HSP70 and HSP40 in vitro to be able to bind the epsilon loop of the pgRNA. Because deletion of the RNase H region renders the protein partly chaperone-independent, the chaperones may be needed indirectly to relieve occlusion of the RNA-binding site by this domain. Inhibited by several reverse-transcriptase inhibitors: Lamivudine, Adefovir and Entecavir. In terms of biological role, multifunctional enzyme that converts the viral RNA genome into dsDNA in viral cytoplasmic capsids. This enzyme displays a DNA polymerase activity that can copy either DNA or RNA templates, and a ribonuclease H (RNase H) activity that cleaves the RNA strand of RNA-DNA heteroduplexes in a partially processive 3'- to 5'-endonucleasic mode. Neo-synthesized pregenomic RNA (pgRNA) are encapsidated together with the P protein, and reverse-transcribed inside the nucleocapsid. Initiation of reverse-transcription occurs first by binding the epsilon loop on the pgRNA genome, and is initiated by protein priming, thereby the 5'-end of (-)DNA is covalently linked to P protein. Partial (+)DNA is synthesized from the (-)DNA template and generates the relaxed circular DNA (RC-DNA) genome. After budding and infection, the RC-DNA migrates in the nucleus, and is converted into a plasmid-like covalently closed circular DNA (cccDNA). The activity of P protein does not seem to be necessary for cccDNA generation, and is presumably released from (+)DNA by host nuclear DNA repair machinery. The chain is Protein P from Hepatitis B virus genotype A2 subtype adw (isolate Japan/Nishioka/1983) (HBV-A).